The primary structure comprises 600 residues: CTP synthase (600 aa).

Positions 304–570 (TIVLVGKYTH…IQSGEEVEWS (267 aa)) constitute a Glutamine amidotransferase type-1 domain. Catalysis depends on for GATase activity residues Cys-403, His-532, and Glu-534.

Belongs to the CTP synthase family.

It carries out the reaction UTP + L-glutamine + ATP + H2O = CTP + L-glutamate + ADP + phosphate + 2 H(+). It participates in pyrimidine metabolism; CTP biosynthesis via de novo pathway; CTP from UDP: step 2/2. Functionally, catalyzes the ATP-dependent amination of UTP to CTP with either L-glutamine or ammonia as the source of nitrogen. This chain is CTP synthase (ura7), found in Schizosaccharomyces pombe (strain 972 / ATCC 24843) (Fission yeast).